Consider the following 354-residue polypeptide: Uroporphyrinogen decarboxylase (354 aa).

Residues 27–31, Asp77, Tyr154, Thr209, and His327 each bind substrate; that span reads RQAGR.

Belongs to the uroporphyrinogen decarboxylase family. As to quaternary structure, homodimer.

It is found in the cytoplasm. The catalysed reaction is uroporphyrinogen III + 4 H(+) = coproporphyrinogen III + 4 CO2. It participates in porphyrin-containing compound metabolism; protoporphyrin-IX biosynthesis; coproporphyrinogen-III from 5-aminolevulinate: step 4/4. Its function is as follows. Catalyzes the decarboxylation of four acetate groups of uroporphyrinogen-III to yield coproporphyrinogen-III. This chain is Uroporphyrinogen decarboxylase, found in Escherichia coli (strain UTI89 / UPEC).